A 151-amino-acid chain; its full sequence is Differentiation-associated protein 2 (151 aa).

Residues 1–22 form the signal peptide; it reads MKQIIRLITTLLLLSLIGITCA.

It localises to the endoplasmic reticulum. It is found in the vacuole. Has an essential role in the initiation of differentiation. Also required for cAMP signaling. This Dictyostelium discoideum (Social amoeba) protein is Differentiation-associated protein 2 (dia2).